Reading from the N-terminus, the 25-residue chain is MRAKWKKKRMRRLKRKRRKMRQRSK.

A disordered region spans residues 1–25 (MRAKWKKKRMRRLKRKRRKMRQRSK).

Belongs to the eukaryotic ribosomal protein eS32 family. As to quaternary structure, component of the small ribosomal subunit (SSU).

The chain is Small ribosomal subunit protein eS32 eS32z/eS32y/eS32x/eS32w/eS32v (RPL41A) from Arabidopsis thaliana (Mouse-ear cress).